Consider the following 278-residue polypeptide: Release factor glutamine methyltransferase (278 aa).

S-adenosyl-L-methionine contacts are provided by residues 117–121 (GTGSG), Asp-140, and Asn-184. Residue 184 to 187 (NPPY) participates in substrate binding.

It belongs to the protein N5-glutamine methyltransferase family. PrmC subfamily.

The catalysed reaction is L-glutaminyl-[peptide chain release factor] + S-adenosyl-L-methionine = N(5)-methyl-L-glutaminyl-[peptide chain release factor] + S-adenosyl-L-homocysteine + H(+). Functionally, methylates the class 1 translation termination release factors RF1/PrfA and RF2/PrfB on the glutamine residue of the universally conserved GGQ motif. The polypeptide is Release factor glutamine methyltransferase (Bacteroides thetaiotaomicron (strain ATCC 29148 / DSM 2079 / JCM 5827 / CCUG 10774 / NCTC 10582 / VPI-5482 / E50)).